The chain runs to 163 residues: Nucleotide-binding protein BSU11020 (163 aa).

Belongs to the YajQ family.

In terms of biological role, nucleotide-binding protein. This is Nucleotide-binding protein BSU11020 (yitK) from Bacillus subtilis (strain 168).